The primary structure comprises 361 residues: Teichoic acids export ATP-binding protein TagH (361 aa).

The region spanning 13 to 246 (TKEYDLYKSQ…YREFTKWFKG (234 aa)) is the ABC transporter domain. 60–67 (GVNGSGKS) is an ATP binding site. Residues 247–361 (QSKKEKKHFQ…HDTNATSGVK (115 aa)) are unknown.

It belongs to the ABC transporter superfamily. Teichoic acids exporter (TC 3.A.1.104.1) family. In terms of assembly, the complex is composed of two ATP-binding proteins (TagH) and two transmembrane proteins (TagG).

It localises to the cell membrane. The catalysed reaction is ATP + H2O + teichoic acidSide 1 = ADP + phosphate + teichoic acidSide 2.. Its function is as follows. Part of the ABC transporter complex TagGH involved in teichoic acids export. Responsible for energy coupling to the transport system. The sequence is that of Teichoic acids export ATP-binding protein TagH from Levilactobacillus brevis (strain ATCC 367 / BCRC 12310 / CIP 105137 / JCM 1170 / LMG 11437 / NCIMB 947 / NCTC 947) (Lactobacillus brevis).